The following is a 313-amino-acid chain: Formimidoylglutamase (313 aa).

The Mn(2+) site is built by H130, D155, H157, D159, D241, and D243.

This sequence belongs to the arginase family. Mn(2+) serves as cofactor.

The enzyme catalyses N-formimidoyl-L-glutamate + H2O = formamide + L-glutamate. It participates in amino-acid degradation; L-histidine degradation into L-glutamate; L-glutamate from N-formimidoyl-L-glutamate (hydrolase route): step 1/1. In terms of biological role, catalyzes the conversion of N-formimidoyl-L-glutamate to L-glutamate and formamide. The chain is Formimidoylglutamase from Citrobacter koseri (strain ATCC BAA-895 / CDC 4225-83 / SGSC4696).